The primary structure comprises 287 residues: MSGVFLEAAAGAAGRPAGLPGRGGQPGLAGAEGGEGRAGPGAHGDGVRQGGGLQTGGAGAAARHRGAVAPTKLRCGGPEGCYYARVESLICALHGVSSLYVCRACENYHVCDGGDECIVVNTGDNMVCFLTGNCVADNIQDFCDLNIAVKKKEMECAPTDDYNTFLGIAEAIKKDIFTFFNREDGKLAEIREAILTEGGLRPEIGRLIEVTLRVSIHIFSKSDHGYDVICSMYVQIIISIYSTKTVYNGLLFKCTKNKRYDSVLKKMRELWMSTSATGGCAGAAAAD.

The segment at 13 to 58 is disordered; sequence AGRPAGLPGRGGQPGLAGAEGGEGRAGPGAHGDGVRQGGGLQTGGA. Residues 20–58 show a composition bias toward gly residues; sequence PGRGGQPGLAGAEGGEGRAGPGAHGDGVRQGGGLQTGGA.

This sequence belongs to the herpesviridae UL92 family.

The protein is Gene 31 protein (31) of Equine herpesvirus 2 (strain 86/87) (EHV-2).